We begin with the raw amino-acid sequence, 270 residues long: Chlorophyll a-b binding protein, chloroplastic (270 aa).

A chloroplast-targeting transit peptide spans 1–41 (MASACASSTIAAVAFSSPSSQKNGSIVGATKASFLGGKRLR). Chlorophyll b is bound at residue Trp68. Phe88, Glu107, and His110 together coordinate chlorophyll a. A chlorophyll b-binding site is contributed by Arg112. The chain crosses the membrane as a helical span at residues 113–133 (WAMLGAAGIFIPEFLTKIGVL). Gln144 is a binding site for chlorophyll a. Residues 146 to 166 (YFTDTTTLFVIELVLIGWAEG) form a helical membrane-spanning segment. Residues Val155, Glu165, and Arg168 each coordinate chlorophyll b. Residues Lys221, Glu222, Asn225, Arg227, Gln239, and His254 each contribute to the chlorophyll a site. A helical transmembrane segment spans residues 228–248 (LAMLAVMGAWFQHIYTGTGPI).

This sequence belongs to the light-harvesting chlorophyll a/b-binding (LHC) protein family. The LHC complex consists of chlorophyll a-b binding proteins. Binds at least 14 chlorophylls (8 Chl-a and 6 Chl-b) and carotenoids such as lutein and neoxanthin. is required as a cofactor. Photoregulated by reversible phosphorylation of its threonine residues.

It is found in the plastid. The protein localises to the chloroplast thylakoid membrane. In terms of biological role, the light-harvesting complex (LHC) functions as a light receptor, it captures and delivers excitation energy to photosystems with which it is closely associated. The polypeptide is Chlorophyll a-b binding protein, chloroplastic (Petunia hybrida (Petunia)).